Here is a 364-residue protein sequence, read N- to C-terminus: Dual-specificity RNA methyltransferase RlmN (364 aa).

Catalysis depends on Glu-91, which acts as the Proton acceptor. Positions 97 to 333 (ESDRGTLCIS…VTVRKTRGDD (237 aa)) constitute a Radical SAM core domain. A disulfide bond links Cys-104 and Cys-338. [4Fe-4S] cluster contacts are provided by Cys-111, Cys-115, and Cys-118. S-adenosyl-L-methionine is bound by residues 164 to 165 (GE), Ser-196, 218 to 220 (SLH), and Asn-295. Cys-338 acts as the S-methylcysteine intermediate in catalysis.

This sequence belongs to the radical SAM superfamily. RlmN family. It depends on [4Fe-4S] cluster as a cofactor.

The protein resides in the cytoplasm. The catalysed reaction is adenosine(2503) in 23S rRNA + 2 reduced [2Fe-2S]-[ferredoxin] + 2 S-adenosyl-L-methionine = 2-methyladenosine(2503) in 23S rRNA + 5'-deoxyadenosine + L-methionine + 2 oxidized [2Fe-2S]-[ferredoxin] + S-adenosyl-L-homocysteine. It catalyses the reaction adenosine(37) in tRNA + 2 reduced [2Fe-2S]-[ferredoxin] + 2 S-adenosyl-L-methionine = 2-methyladenosine(37) in tRNA + 5'-deoxyadenosine + L-methionine + 2 oxidized [2Fe-2S]-[ferredoxin] + S-adenosyl-L-homocysteine. Functionally, specifically methylates position 2 of adenine 2503 in 23S rRNA and position 2 of adenine 37 in tRNAs. m2A2503 modification seems to play a crucial role in the proofreading step occurring at the peptidyl transferase center and thus would serve to optimize ribosomal fidelity. The protein is Dual-specificity RNA methyltransferase RlmN of Neisseria meningitidis serogroup A / serotype 4A (strain DSM 15465 / Z2491).